Reading from the N-terminus, the 383-residue chain is Acyl-CoA dehydrogenase, short-chain specific (383 aa).

Residue Glu367 is the Proton acceptor of the active site.

It belongs to the acyl-CoA dehydrogenase family. As to quaternary structure, homotetramer. It depends on FAD as a cofactor.

The catalysed reaction is butanoyl-CoA + oxidized [electron-transfer flavoprotein] + H(+) = (2E)-butenoyl-CoA + reduced [electron-transfer flavoprotein]. It catalyses the reaction a short-chain 2,3-saturated fatty acyl-CoA + oxidized [electron-transfer flavoprotein] + H(+) = a short-chain (2E)-enoyl-CoA + reduced [electron-transfer flavoprotein]. Has an optimum specificity for 4-carbon length fatty acyl-CoAs. This is Acyl-CoA dehydrogenase, short-chain specific from Megasphaera elsdenii.